Consider the following 431-residue polypeptide: Glutamate-1-semialdehyde 2,1-aminomutase (431 aa).

Lys265 carries the post-translational modification N6-(pyridoxal phosphate)lysine.

It belongs to the class-III pyridoxal-phosphate-dependent aminotransferase family. HemL subfamily. In terms of assembly, homodimer. The cofactor is pyridoxal 5'-phosphate.

The protein localises to the cytoplasm. The enzyme catalyses (S)-4-amino-5-oxopentanoate = 5-aminolevulinate. It functions in the pathway porphyrin-containing compound metabolism; protoporphyrin-IX biosynthesis; 5-aminolevulinate from L-glutamyl-tRNA(Glu): step 2/2. In Vibrio parahaemolyticus serotype O3:K6 (strain RIMD 2210633), this protein is Glutamate-1-semialdehyde 2,1-aminomutase.